The chain runs to 488 residues: MAGPVRCLPPVVEATSIPHAPPVISKEVSEIVNNMLSVAIPAAAAASAQDQRFASQFRCGPEFTTMKAQALEACRKILAENDQGGYTIPAKGLYPYQWNWDSALVSLGLAEMEEERAWEELDRLMSAQWEDGMVPHIVFHKPSSTYFPGPEIWGSPDKPRNTTGITQPPVAAISVRRLLEEAKDKALALAMARKLFPKLLAWHRWFYRARDPEGTGLVATIHPWETGMDNSPAWDEALARVPIDDIPPYVRRDLGHVDAKMRPQKAEYDRYLTLLYRFRALDYDEAKLYYETPFRVTDLCTNCILHKANEDLLWLAGATGACTDESEIRGWTARANVAFDTLFDVEAGLYRCKDQLTGQFLPAATSAGFLPLFAGVASGEKASAVARTLGRWLDDVAYGIPSCDPRDPQFEALRYWRGPVWLIVNWMVSEGLKRYGYGELAQRVERDSYELVKNGGIFEYYCPLTGMGAGGGCFSWTAAMCLAWLFKT.

Substrate contacts are provided by residues Tyr94, 98 to 101 (WNWD), Tyr146, Gln167, and Gly227. Asp229 functions as the Proton donor in the catalytic mechanism. Substrate-binding positions include Arg262 and 415-416 (YW). Glu459 acts as the Proton acceptor in catalysis.

It belongs to the glycosyl hydrolase 63 family.

The enzyme catalyses (2R)-2-O-(alpha-D-mannosyl)-glycerate + H2O = D-mannose + (R)-glycerate. The catalysed reaction is (2R)-2-O-(alpha-D-glucopyranosyl)-glycerate + H2O = (R)-glycerate + D-glucose. Its activity is regulated as follows. Activity is not dependent on divalent cations, but it is enhanced by Mn(2+). Catalyzes the hydrolysis of alpha-D-mannosyl-glycerate (MG) to D-glycerate and D-mannose. Can also hydrolyze alpha-D-glucopyranosyl-glycerate (GG)with lower efficiency. The polypeptide is Mannosylglycerate hydrolase MGH1 (Selaginella moellendorffii (Spikemoss)).